Reading from the N-terminus, the 424-residue chain is Synaptotagmin-1 (424 aa).

Residues 1–60 (MVSESHHEALAAPPATTVAAALPSNVTEPAAPGGGGGKEDAFSNLKKKFMNELNKIPLPP) lie on the Vesicular side of the membrane. Asn25 carries an N-linked (GlcNAc...) asparagine glycan. A helical transmembrane segment spans residues 61–82 (WALIAIAIVAVLLILTCCFCLC). S-palmitoyl cysteine attachment occurs at residues Cys77, Cys78, Cys80, Cys82, and Cys85. At 83–424 (KKCLFKKKNK…EVDAMLAVKK (342 aa)) the chain is on the cytoplasmic side. Positions 117 to 142 (KDQALKDDDAETGLTDGEEKEEPKEV) are disordered. Residues 124 to 136 (DDAETGLTDGEEK) are compositionally biased toward acidic residues. The interval 138–384 (EPKEVEKLGK…AIGKVFVGYN (247 aa)) is phospholipid binding. C2 domains are found at residues 144–263 (KLGK…EEWR) and 275–408 (KLGD…AQWH). Ca(2+)-binding residues include Leu174, Asp175, Asp181, Asp233, Phe234, Asp235, Ser238, Lys239, Asp241, Asp306, Asp312, Asp366, Asp368, and Asp374.

The protein belongs to the synaptotagmin family. As to quaternary structure, homotetramer. Ca(2+) is required as a cofactor.

It is found in the cytoplasmic vesicle. The protein resides in the secretory vesicle membrane. It localises to the secretory vesicle. Its subcellular location is the synaptic vesicle membrane. The protein localises to the chromaffin granule membrane. It is found in the cytoplasm. Functionally, calcium sensor that participates in triggering neurotransmitter release at the synapse. May have a regulatory role in the membrane interactions during trafficking of synaptic vesicles at the active zone of the synapse. It binds acidic phospholipids with a specificity that requires the presence of both an acidic head group and a diacyl backbone. May play a role in dendrite formation by melanocytes. This is Synaptotagmin-1 (SYT1) from Gallus gallus (Chicken).